A 479-amino-acid chain; its full sequence is Adenosylhomocysteinase (479 aa).

Substrate contacts are provided by T66, D142, and E203. Residue 204–206 (TTT) coordinates NAD(+). The substrate site is built by K233 and D237. NAD(+)-binding positions include N238, 267-272 (GYGDVG), E290, N325, 346-348 (IGH), and N394.

This sequence belongs to the adenosylhomocysteinase family. NAD(+) serves as cofactor.

Its subcellular location is the cytoplasm. It catalyses the reaction S-adenosyl-L-homocysteine + H2O = L-homocysteine + adenosine. The protein operates within amino-acid biosynthesis; L-homocysteine biosynthesis; L-homocysteine from S-adenosyl-L-homocysteine: step 1/1. Functionally, may play a key role in the regulation of the intracellular concentration of adenosylhomocysteine. The polypeptide is Adenosylhomocysteinase (Oleidesulfovibrio alaskensis (strain ATCC BAA-1058 / DSM 17464 / G20) (Desulfovibrio alaskensis)).